Reading from the N-terminus, the 137-residue chain is Probable 4-amino-4-deoxy-L-arabinose-phosphoundecaprenol flippase subunit ArnF (137 aa).

Residues 1–3 (MNA) are Cytoplasmic-facing. The chain crosses the membrane as a helical span at residues 4–24 (LRGWLAALGSVLLASAAQLGM). Over 25–44 (RWGMSRLPLPEAWAGQTPER) the chain is Periplasmic. A helical membrane pass occupies residues 45–65 (AALLAVALAVAAYAASLLCWL). Over 66-76 (AALRHLPLGRA) the chain is Cytoplasmic. The chain crosses the membrane as a helical span at residues 77–97 (YSLLSASYALVYLLAASLPAF). Over 98–100 (DET) the chain is Periplasmic. A helical transmembrane segment spans residues 101-121 (FSTSKTLGVGLVVLGVLTVNA). The Cytoplasmic portion of the chain corresponds to 122–137 (RRTAAAPAHHPSRKAP).

Belongs to the ArnF family. Heterodimer of ArnE and ArnF.

It localises to the cell inner membrane. It participates in bacterial outer membrane biogenesis; lipopolysaccharide biosynthesis. Its function is as follows. Translocates 4-amino-4-deoxy-L-arabinose-phosphoundecaprenol (alpha-L-Ara4N-phosphoundecaprenol) from the cytoplasmic to the periplasmic side of the inner membrane. This Pseudomonas aeruginosa (strain ATCC 15692 / DSM 22644 / CIP 104116 / JCM 14847 / LMG 12228 / 1C / PRS 101 / PAO1) protein is Probable 4-amino-4-deoxy-L-arabinose-phosphoundecaprenol flippase subunit ArnF.